We begin with the raw amino-acid sequence, 120 residues long: Large ribosomal subunit protein uL18 (120 aa).

The span at 1 to 10 shows a compositional bias: basic and acidic residues; it reads MSTPRKEQTQ. The disordered stretch occupies residues 1–25; the sequence is MSTPRKEQTQKRHRRLRRHLEGTPE.

It belongs to the universal ribosomal protein uL18 family. In terms of assembly, part of the 50S ribosomal subunit; part of the 5S rRNA/L5/L18/L25 subcomplex. Contacts the 5S and 23S rRNAs.

In terms of biological role, this is one of the proteins that bind and probably mediate the attachment of the 5S RNA into the large ribosomal subunit, where it forms part of the central protuberance. This chain is Large ribosomal subunit protein uL18, found in Synechococcus sp. (strain RCC307).